Reading from the N-terminus, the 129-residue chain is Small ribosomal subunit protein bS16m (129 aa).

This sequence belongs to the bacterial ribosomal protein bS16 family. Component of the mitochondrial ribosome small subunit (28S) which comprises a 12S rRNA and about 30 distinct proteins.

It is found in the mitochondrion. The sequence is that of Small ribosomal subunit protein bS16m (mRpS16) from Drosophila melanogaster (Fruit fly).